The chain runs to 156 residues: Small ribosomal subunit protein uS7 (156 aa).

It belongs to the universal ribosomal protein uS7 family. In terms of assembly, part of the 30S ribosomal subunit. Contacts proteins S9 and S11.

In terms of biological role, one of the primary rRNA binding proteins, it binds directly to 16S rRNA where it nucleates assembly of the head domain of the 30S subunit. Is located at the subunit interface close to the decoding center, probably blocks exit of the E-site tRNA. The sequence is that of Small ribosomal subunit protein uS7 from Chromohalobacter salexigens (strain ATCC BAA-138 / DSM 3043 / CIP 106854 / NCIMB 13768 / 1H11).